The following is a 794-amino-acid chain: Copper-exporting P-type ATPase (794 aa).

HMA domains lie at 5 to 70 (KKTT…YGVL) and 72 to 138 (ETAE…YDAQ). Residues cysteine 16, cysteine 19, cysteine 83, and cysteine 86 each contribute to the Cu(+) site. A run of 6 helical transmembrane segments spans residues 162 to 182 (IISAVLAAPLLLTMLVHLFGI), 187 to 207 (IFMNPWFQFILATPVQFIIGW), 224 to 244 (MDVLVALGTSAAYFYSLYEMV), 250 to 270 (ANVMPHLYFETSAVLITLILF), 411 to 431 (YFVPIVVGIAVLTFIIWIAFV), and 438 to 458 (PALVAAIAVLVIACPCALGLA). Catalysis depends on aspartate 495, which acts as the 4-aspartylphosphate intermediate. Mg(2+)-binding residues include aspartate 689 and aspartate 693. 2 helical membrane passes run 747–766 (LFWAFGYNVAGIPIAALGLL) and 770–789 (IAGAAMALSSVSVVTNALRL).

It belongs to the cation transport ATPase (P-type) (TC 3.A.3) family. Type IB subfamily.

Its subcellular location is the cell membrane. It catalyses the reaction Cu(+)(in) + ATP + H2O = Cu(+)(out) + ADP + phosphate + H(+). In terms of biological role, involved in copper export. The polypeptide is Copper-exporting P-type ATPase (copA) (Staphylococcus saprophyticus subsp. saprophyticus (strain ATCC 15305 / DSM 20229 / NCIMB 8711 / NCTC 7292 / S-41)).